A 374-amino-acid polypeptide reads, in one-letter code: 4-hydroxybenzoate polyprenyltransferase, mitochondrial (374 aa).

The transit peptide at 1–63 (MLRLGGAGLV…RALSLSAAAV (63 aa)) directs the protein to the mitochondrion. Residues 64-83 (VNSAPRPLQPYLRLMRLDKP) are Mitochondrial matrix-facing. The chain crosses the membrane as a helical span at residues 84 to 104 (IGTWLLYLPCTWSIGLAADPG). Residues 105-108 (CFPD) are Mitochondrial intermembrane-facing. The helical transmembrane segment at 109 to 129 (WYMLSLFGTGAILMRGAGCTI) threads the bilayer. Over 130-153 (NDMWDRDFDKKVERTANRPIAAGD) the chain is Mitochondrial matrix. Residues 154–174 (ISAFQSFVFLGAQLTLALGVL) traverse the membrane as a helical segment. Residues 175-176 (LH) are Mitochondrial intermembrane-facing. The helical transmembrane segment at 177–197 (LNYYSIAMGAASLLLVVTYPL) threads the bilayer. Residues 198-200 (MKR) lie on the Mitochondrial matrix side of the membrane. A helical membrane pass occupies residues 201 to 221 (VTFWPQLALGLTFNWGALLGW). The Mitochondrial intermembrane portion of the chain corresponds to 222–230 (SAVKGSCDP). A helical membrane pass occupies residues 231–251 (AVCLPLYFSGVMWTLIYDTIY). The Mitochondrial matrix segment spans residues 252–277 (AHQDKKDDALIGLKSTALLFRENTKQ). A helical membrane pass occupies residues 278 to 298 (WLSGFGVAMVGALSLVGASSG). Over 299-300 (QT) the chain is Mitochondrial intermembrane. A helical membrane pass occupies residues 301 to 321 (LPYYAAVAAVGAHLAHQIYTV). The Mitochondrial matrix portion of the chain corresponds to 322–332 (DIHRAEDCWEK). The chain crosses the membrane as a helical span at residues 333–353 (FTSNRTVGLLLFLGIVLGNLY). Topologically, residues 354 to 374 (KDKPDETKGVDAVGEESERTS) are mitochondrial intermembrane.

The protein belongs to the UbiA prenyltransferase family. The cofactor is Mg(2+).

The protein resides in the mitochondrion inner membrane. It catalyses the reaction an all-trans-polyprenyl diphosphate + 4-hydroxybenzoate = a 4-hydroxy-3-(all-trans-polyprenyl)benzoate + diphosphate. The enzyme catalyses all-trans-decaprenyl diphosphate + 4-hydroxybenzoate = 4-hydroxy-3-(all-trans-decaprenyl)benzoate + diphosphate. The catalysed reaction is all-trans-nonaprenyl diphosphate + 4-hydroxybenzoate = 4-hydroxy-3-(all-trans-nonaprenyl)benzoate + diphosphate. It participates in cofactor biosynthesis; ubiquinone biosynthesis. Mediates the second step in the final reaction sequence of coenzyme Q (CoQ) biosynthesis. Catalyzes the prenylation of para-hydroxybenzoate (PHB) with an all-trans polyprenyl group (such as all-trans-nonaprenyl diphosphate). The length of the polyprenyl side chain varies depending on the species, in humans, the side chain is comprised of 10 isoprenyls producing CoQ10 (also known as ubiquinone), whereas rodents predominantly generate CoQ9. However, this specificity is not complete, human tissues have low amounts of CoQ9 and rodent organs contain some CoQ10. Plays a central role in the biosynthesis of CoQ9. CoQ9 is a vital molecule that transports electrons from mitochondrial respiratory chain complexes. CoQs also function as cofactors for uncoupling protein and plays a role as regulator of the extracellularly-induced ceramide-dependent apoptotic pathway. Regulates mitochondrial permeability transition pore (mPTP) opening and ROS production (pivotal events in cell death) in a tissue specific manner. This Rattus norvegicus (Rat) protein is 4-hydroxybenzoate polyprenyltransferase, mitochondrial.